Consider the following 210-residue polypeptide: Large ribosomal subunit protein uL3 (210 aa).

The protein belongs to the universal ribosomal protein uL3 family. As to quaternary structure, part of the 50S ribosomal subunit. Forms a cluster with proteins L14 and L19.

In terms of biological role, one of the primary rRNA binding proteins, it binds directly near the 3'-end of the 23S rRNA, where it nucleates assembly of the 50S subunit. This chain is Large ribosomal subunit protein uL3, found in Pediococcus pentosaceus (strain ATCC 25745 / CCUG 21536 / LMG 10740 / 183-1w).